Reading from the N-terminus, the 911-residue chain is Gag-Pro polyprotein (911 aa).

A propeptide spanning residues 101 to 161 (AAVAQTEEIL…TKKPKRFPVL (61 aa)) is cleaved from the precursor. 2 stretches are compositionally biased toward polar residues: residues 113 to 125 (NSQTDLTKTSQNP) and 140 to 152 (KSSSLQDKGLSST). Residues 113–178 (NSQTDLTKTS…DPEDPNPSEV (66 aa)) are disordered. Positions 202–205 (PPPY) match the PPXY motif motif. The PTAP/PSAP motif motif lies at 210–213 (PSAP). Residues 216–257 (MAVVNPKEELKEKIAQLEEQIKLEELHQALISKLQKLKTGNE) are a coiled coil. Residues 260–279 (THPDTAGGLSRTPHWPGQHI) form a disordered region. 2 consecutive CCHC-type zinc fingers follow at residues 547 to 564 (GCCFKCGKKGHFAKNCHE) and 576 to 593 (GLCPRCKRGKHWANECKS). The tract at residues 592 to 626 (KSKTDNQGNPIPPHQGNRVEGPAPGPETSLWGSQL) is disordered. In terms of domain architecture, Peptidase A2 spans 780–856 (FTGLIDTGAD…LPVNLWGRDL (77 aa)). Aspartate 785 acts as the Protease; shared with dimeric partner in catalysis. The G-patch domain maps to 867-911 (PNDIVTAQMLAQGYSPGKGLGKKENGILHPIPNQGQSNKKGFGNF).

In terms of assembly, homodimer. Interacts with the reverse transcriptase/ribonuclease H. As to quaternary structure, homotrimer. Post-translationally, released by autocatalytic processing. The protease can undergo further autoprocessing to yield 2 shorter but enzymatically active forms of 12 kDa and 13 kDa without the GDP domain. the 12 kDa form is monomeric. Myristoylated. Myristoylation of the matrix (MA) domain mediates the transport and binding of Gag polyproteins to the host plasma membrane and is required for the assembly of viral particles. In terms of processing, specific enzymatic cleavages in vivo yield mature proteins.

The protein resides in the virion. It carries out the reaction dUTP + H2O = dUMP + diphosphate + H(+). Functionally, matrix protein. In terms of biological role, nucleocapsid protein p14: Nucleocapsid protein. Its function is as follows. Capsid protein. The aspartyl protease mediates proteolytic cleavages of Gag and Gag-Pol polyproteins during or shortly after the release of the virion from the plasma membrane. Cleavages take place as an ordered, step-wise cascade to yield mature proteins. This process is called maturation. Displays maximal activity during the budding process just prior to particle release from the cell. Functionally, enhances the activity of the reverse transcriptase. May be part of the mature RT. The polypeptide is Gag-Pro polyprotein (gag-pro) (Mason-Pfizer monkey virus (MPMV)).